Reading from the N-terminus, the 201-residue chain is Proteasome subunit beta 1 (201 aa).

Met1 is a propeptide (removed in mature form; by autocatalysis). Thr2 (nucleophile) is an active-site residue.

It belongs to the peptidase T1B family. The 20S proteasome core is composed of 14 alpha and 14 beta subunits that assemble into four stacked heptameric rings, resulting in a barrel-shaped structure. The two inner rings, each composed of seven catalytic beta subunits, are sandwiched by two outer rings, each composed of seven alpha subunits. The catalytic chamber with the active sites is on the inside of the barrel. Has a gated structure, the ends of the cylinder being occluded by the N-termini of the alpha-subunits. Is capped at one or both ends by the proteasome regulatory ATPase, PAN.

The protein resides in the cytoplasm. It catalyses the reaction Cleavage of peptide bonds with very broad specificity.. The formation of the proteasomal ATPase PAN-20S proteasome complex, via the docking of the C-termini of PAN into the intersubunit pockets in the alpha-rings, triggers opening of the gate for substrate entry. Interconversion between the open-gate and close-gate conformations leads to a dynamic regulation of the 20S proteasome proteolysis activity. Its function is as follows. Component of the proteasome core, a large protease complex with broad specificity involved in protein degradation. This is Proteasome subunit beta 1 from Pyrobaculum neutrophilum (strain DSM 2338 / JCM 9278 / NBRC 100436 / V24Sta) (Thermoproteus neutrophilus).